We begin with the raw amino-acid sequence, 193 residues long: MLDREGFRPNVGIILINAQNEVWWGKRVREHSWQFPQGGIKFGETPEQAMFRELEEEVGLRAEHVKIIGRTRDWLRYEVPDHFIKREIRGHYKGQKQIWFLLRMVGRDCDVNLRLTEHPEFDAWRWHDYWVPLDVVIEFKRDVYQRALQELSRFLSRPAHPAPIHNTARYLRQTHSARKTDEPSTEQTKPNNE.

The Nudix hydrolase domain occupies 6-149 (GFRPNVGIIL…KRDVYQRALQ (144 aa)). The short motif at 38 to 59 (GGIKFGETPEQAMFRELEEEVG) is the Nudix box element. A disordered region spans residues 174 to 193 (THSARKTDEPSTEQTKPNNE).

This sequence belongs to the Nudix hydrolase family. RppH subfamily. A divalent metal cation serves as cofactor.

Functionally, accelerates the degradation of transcripts by removing pyrophosphate from the 5'-end of triphosphorylated RNA, leading to a more labile monophosphorylated state that can stimulate subsequent ribonuclease cleavage. The chain is RNA pyrophosphohydrolase from Herminiimonas arsenicoxydans.